The following is a 71-amino-acid chain: Protein SlyX homolog (71 aa).

Belongs to the SlyX family.

This is Protein SlyX homolog from Rhodopseudomonas palustris (strain BisB5).